Here is a 361-residue protein sequence, read N- to C-terminus: Spermatogenesis-associated protein 17 (361 aa).

3 consecutive IQ domains span residues 32–61 (ENDAAVKIQSWFRGCQVRAYVRHLNRIVTI), 55–84 (LNRIVTIIQKWWRSFLGRKQYQLTVQVAYY), and 91–120 (YNAMAVRKQRRWRGYRVRKYLFNYYYLKEY).

It is found in the cytoplasm. The polypeptide is Spermatogenesis-associated protein 17 (SPATA17) (Macaca fascicularis (Crab-eating macaque)).